The following is a 119-amino-acid chain: Putative yippee-like protein Os10g0369500 (119 aa).

Positions 21-118 (AVLKCRRCRV…LEKARMWKEA (98 aa)) constitute a Yippee domain. 4 residues coordinate Zn(2+): cysteine 25, cysteine 28, cysteine 81, and cysteine 84.

The protein belongs to the yippee family.

The sequence is that of Putative yippee-like protein Os10g0369500 from Oryza sativa subsp. japonica (Rice).